The chain runs to 411 residues: Protein DDI1 homolog 2 (411 aa).

One can recognise a Ubiquitin-like domain in the interval 1-81; it reads MLLTVFCAPR…LVLRQAERLR (81 aa). Residues 82–144 form a disordered region; sequence APPQPTVPGL…SGVSPQGLDN (63 aa). The span at 108–121 shows a compositional bias: low complexity; it reads QNRNRPQQAQRPST. Asp262 is an active-site residue. Residues 387-406 carry the Ubiquitin-binding motif; it reads DEIADRELAEAIQRSVQDSG.

The protein belongs to the DDI1 family. As to quaternary structure, homodimer.

The protein localises to the cytoplasm. It is found in the cytosol. It localises to the chromosome. Functionally, aspartic protease that mediates the cleavage of NFE2L1/NRF1 at 'Leu-104', thereby promoting release of NFE2L1/NRF1 from the endoplasmic reticulum membrane. Ubiquitination of NFE2L1/NRF1 is a prerequisite for cleavage, suggesting that DDI2 specifically recognizes and binds ubiquitinated NFE2L1/NRF1. Seems to act as a proteasomal shuttle which links the proteasome and replication fork proteins like RTF2. Required for cellular survival following replication stress. This is Protein DDI1 homolog 2 (ddi2) from Danio rerio (Zebrafish).